A 210-amino-acid polypeptide reads, in one-letter code: Thymidylate kinase (210 aa).

An ATP-binding site is contributed by 16–23; it reads GGDGVGKS.

It belongs to the thymidylate kinase family.

The catalysed reaction is dTMP + ATP = dTDP + ADP. Its function is as follows. Phosphorylation of dTMP to form dTDP in both de novo and salvage pathways of dTTP synthesis. This chain is Thymidylate kinase, found in Leifsonia xyli subsp. xyli (strain CTCB07).